A 164-amino-acid polypeptide reads, in one-letter code: Mediator of RNA polymerase II transcription subunit 21 (164 aa).

Positions 49-81 are disordered; that stretch reads APLPANQTQQGSTLGSNRQTVSPSTQAEAESNF. Positions 53-81 are enriched in polar residues; the sequence is ANQTQQGSTLGSNRQTVSPSTQAEAESNF. The stretch at 114–146 forms a coiled coil; the sequence is ESQLKIIDDLSKELQSVEQEQVKKIQEKDKLLK.

Belongs to the Mediator complex subunit 21 family. As to quaternary structure, component of the Mediator complex.

Its subcellular location is the nucleus. Component of the Mediator complex, a coactivator involved in the regulated transcription of nearly all RNA polymerase II-dependent genes. Mediator functions as a bridge to convey information from gene-specific regulatory proteins to the basal RNA polymerase II transcription machinery. Mediator is recruited to promoters by direct interactions with regulatory proteins and serves as a scaffold for the assembly of a functional preinitiation complex with RNA polymerase II and the general transcription factors. In Scheffersomyces stipitis (strain ATCC 58785 / CBS 6054 / NBRC 10063 / NRRL Y-11545) (Yeast), this protein is Mediator of RNA polymerase II transcription subunit 21 (SRB7).